A 141-amino-acid chain; its full sequence is Probable trafficking protein particle complex subunit 2 (141 aa).

It belongs to the TRAPP small subunits family. Sedlin subfamily. Part of the multisubunit TRAPP (transport protein particle) complex.

It is found in the cytoplasm. Its subcellular location is the perinuclear region. It localises to the endoplasmic reticulum. The protein resides in the golgi apparatus. In terms of biological role, may play a role in vesicular transport from endoplasmic reticulum to Golgi. Required for the systemic spread of the RNAi response. The chain is Probable trafficking protein particle complex subunit 2 (sedl-1) from Caenorhabditis elegans.